We begin with the raw amino-acid sequence, 148 residues long: Protein Turandot Z (148 aa).

The N-terminal stretch at 1–23 (MYFAIRLSFVLAVLFCLTGNGSA) is a signal peptide.

This sequence belongs to the Turandot family.

It is found in the secreted. Its function is as follows. A humoral factor that may play a role in stress tolerance. This is Protein Turandot Z from Drosophila sechellia (Fruit fly).